Reading from the N-terminus, the 363-residue chain is Isopentenyl-diphosphate delta-isomerase (363 aa).

6–7 (RK) contacts substrate. Residues 64-66 (AMT), Ser-94, and Asn-123 each bind FMN. Gln-153 lines the substrate pocket. Residue Glu-154 participates in Mg(2+) binding. FMN contacts are provided by residues Lys-185, Ser-210, Thr-215, 259-261 (GVR), and 280-281 (SA).

The protein belongs to the IPP isomerase type 2 family. In terms of assembly, homooctamer. Dimer of tetramers. Requires Mg(2+) as cofactor. The cofactor is FMN. NADPH is required as a cofactor.

It localises to the cytoplasm. It catalyses the reaction isopentenyl diphosphate = dimethylallyl diphosphate. Involved in the biosynthesis of isoprenoids. Catalyzes the 1,3-allylic rearrangement of the homoallylic substrate isopentenyl (IPP) to its allylic isomer, dimethylallyl diphosphate (DMAPP). This chain is Isopentenyl-diphosphate delta-isomerase, found in Streptomyces sp. (strain CL190).